The sequence spans 172 residues: C-phycocyanin beta chain (172 aa).

At asparagine 72 the chain carries N4-methylasparagine. Positions 82 and 153 each coordinate (2R,3E)-phycocyanobilin.

Belongs to the phycobiliprotein family. Heterodimer of an alpha and a beta subunit, which further assembles into trimers and the trimers into hexamers. The basic functional unit of phycobiliproteins is a ring-shaped hexamer formed from two back-to-back trimers contacting via the alpha chain subunits. The trimers are composed of alpha/beta subunit heterodimers arranged around a three-fold axis of symmetry. The phycoerythrins also contain a gamma subunit which is located in the center of the hexamer. Post-translationally, contains two covalently linked bilin chromophores.

The protein localises to the plastid. The protein resides in the chloroplast thylakoid membrane. Functionally, light-harvesting photosynthetic bile pigment-protein from the phycobiliprotein complex (phycobilisome, PBS). Phycocyanin is the major phycobiliprotein in the PBS rod. This Pyropia yezoensis (Susabi-nori) protein is C-phycocyanin beta chain (cpcB).